Reading from the N-terminus, the 388-residue chain is Alanine racemase 2 (388 aa).

Lys-39 serves as the catalytic Proton acceptor; specific for D-alanine. N6-(pyridoxal phosphate)lysine is present on Lys-39. Arg-137 is a substrate binding site. The active-site Proton acceptor; specific for L-alanine is the Tyr-267. Met-315 lines the substrate pocket.

Belongs to the alanine racemase family. Pyridoxal 5'-phosphate serves as cofactor.

The catalysed reaction is L-alanine = D-alanine. The protein operates within amino-acid biosynthesis; D-alanine biosynthesis; D-alanine from L-alanine: step 1/1. Its function is as follows. Catalyzes the interconversion of L-alanine and D-alanine. May also act on other amino acids. This is Alanine racemase 2 (alr2) from Caldanaerobacter subterraneus subsp. tengcongensis (strain DSM 15242 / JCM 11007 / NBRC 100824 / MB4) (Thermoanaerobacter tengcongensis).